A 434-amino-acid chain; its full sequence is Serine--tRNA ligase (434 aa).

239-241 (TAE) is an L-serine binding site. 270–272 (RSE) lines the ATP pocket. Glu293 provides a ligand contact to L-serine. 357–360 (EISS) contacts ATP. Residue Ser393 participates in L-serine binding.

It belongs to the class-II aminoacyl-tRNA synthetase family. Type-1 seryl-tRNA synthetase subfamily. In terms of assembly, homodimer. The tRNA molecule binds across the dimer.

It is found in the cytoplasm. It carries out the reaction tRNA(Ser) + L-serine + ATP = L-seryl-tRNA(Ser) + AMP + diphosphate + H(+). It catalyses the reaction tRNA(Sec) + L-serine + ATP = L-seryl-tRNA(Sec) + AMP + diphosphate + H(+). Its pathway is aminoacyl-tRNA biosynthesis; selenocysteinyl-tRNA(Sec) biosynthesis; L-seryl-tRNA(Sec) from L-serine and tRNA(Sec): step 1/1. Its function is as follows. Catalyzes the attachment of serine to tRNA(Ser). Is also able to aminoacylate tRNA(Sec) with serine, to form the misacylated tRNA L-seryl-tRNA(Sec), which will be further converted into selenocysteinyl-tRNA(Sec). The chain is Serine--tRNA ligase from Pseudoalteromonas translucida (strain TAC 125).